A 711-amino-acid polypeptide reads, in one-letter code: Polyribonucleotide nucleotidyltransferase (711 aa).

Residues D486 and D492 each coordinate Mg(2+). The KH domain occupies 553–612 (PRIHTIKINPDKIKDVIGKGGSVIRALTEETGTTIEIEDDGTVKIAATDGEKAKHAIRRI). The S1 motif domain occupies 622–690 (GRVYTGKVTR…RQGRIRLSIK (69 aa)). A disordered region spans residues 689–711 (IKEATEQSQPAAAPEAPAAEQGE). The segment covering 694–711 (EQSQPAAAPEAPAAEQGE) has biased composition (low complexity).

It belongs to the polyribonucleotide nucleotidyltransferase family. In terms of assembly, component of the RNA degradosome, which is a multiprotein complex involved in RNA processing and mRNA degradation. Requires Mg(2+) as cofactor.

The protein localises to the cytoplasm. It carries out the reaction RNA(n+1) + phosphate = RNA(n) + a ribonucleoside 5'-diphosphate. Its function is as follows. Involved in mRNA degradation. Catalyzes the phosphorolysis of single-stranded polyribonucleotides processively in the 3'- to 5'-direction. This is Polyribonucleotide nucleotidyltransferase from Shigella flexneri serotype 5b (strain 8401).